Here is a 353-residue protein sequence, read N- to C-terminus: Protein MGF 360-9L (353 aa).

It belongs to the asfivirus MGF 360 family. Interacts with host STAT1; this interaction mediates STAT1 degradation through apoptosis. Interacts with host STAT2; this interaction mediates STAT2 degradation through the proteasome.

It localises to the host cytoplasm. Its function is as follows. Plays a role in virus cell tropism, and may be required for efficient virus replication in macrophages. In addition, inhibits IFN-beta-induced IFN-stimulated genes (ISGs) transcription. Mechanistically, degrades host STAT1 and STAT2 through apoptosis and ubiquitin-proteasome pathways respectively. The polypeptide is Protein MGF 360-9L (African swine fever virus (isolate Tick/Malawi/Lil 20-1/1983) (ASFV)).